Consider the following 422-residue polypeptide: Glutamyl-tRNA reductase (422 aa).

Residues 49–52 (TCNR), Ser-108, 113–115 (EPQ), and Gln-119 contribute to the substrate site. The Nucleophile role is filled by Cys-50. 188 to 193 (GAGQTI) is a binding site for NADP(+).

Belongs to the glutamyl-tRNA reductase family. Homodimer.

It catalyses the reaction (S)-4-amino-5-oxopentanoate + tRNA(Glu) + NADP(+) = L-glutamyl-tRNA(Glu) + NADPH + H(+). It participates in porphyrin-containing compound metabolism; protoporphyrin-IX biosynthesis; 5-aminolevulinate from L-glutamyl-tRNA(Glu): step 1/2. Its function is as follows. Catalyzes the NADPH-dependent reduction of glutamyl-tRNA(Glu) to glutamate 1-semialdehyde (GSA). This is Glutamyl-tRNA reductase from Marinomonas sp. (strain MWYL1).